A 243-amino-acid chain; its full sequence is Proteasome subunit beta (243 aa).

Basic and acidic residues-rich tracts occupy residues 1 to 11 (MRTPTHDEFSG) and 33 to 47 (NADR…KETK). A propeptide spans 1 to 49 (MRTPTHDEFSGRLDSLNGDRSNVFGPELGEFSNADRRADELGDKETKTG) (removed in mature form; by autocatalysis). The disordered stretch occupies residues 1–50 (MRTPTHDEFSGRLDSLNGDRSNVFGPELGEFSNADRRADELGDKETKTGT). Thr50 acts as the Nucleophile in catalysis. Ser129 is subject to Phosphoserine.

It belongs to the peptidase T1B family. The 20S proteasome core is composed of 14 alpha and 14 beta subunits that assemble into four stacked heptameric rings, resulting in a barrel-shaped structure. The two inner rings, each composed of seven catalytic beta subunits, are sandwiched by two outer rings, each composed of seven alpha subunits. H.volcanii produces at least 2 types of 20S proteasomes: an alpha1-beta proteasome and a proteasome containing all three subunits (alpha1, alpha2, and beta) that appears to be asymmetrical with homo-oligomeric alpha1 and alpha2 rings positioned on separate ends. The catalytic chamber with the active sites is on the inside of the barrel. Has probably a gated structure, the ends of the cylinder being occluded by the N-termini of the alpha-subunits. Is likely capped at one or both ends by the proteasome regulatory ATPase, PAN.

The protein localises to the cytoplasm. It carries out the reaction Cleavage of peptide bonds with very broad specificity.. With respect to regulation, the formation of the proteasomal ATPase PAN-20S proteasome complex, via the docking of the C-termini of PAN into the intersubunit pockets in the alpha-rings, triggers opening of the gate for substrate entry. Interconversion between the open-gate and close-gate conformations leads to a dynamic regulation of the 20S proteasome proteolysis activity. In vitro, the chymotrypsin-like activity of the alpha1-beta proteasome is potently inhibited by carbobenzoxyl-leucinyl-leucinyl-leucinal-H (MG132) and significantly by N-acetyl-leucinyl-leucinyl-norleucinal-H (calpain inhibitor I). Functionally, component of the proteasome core, a large protease complex with broad specificity involved in protein degradation. The H.volcanii alpha1-beta proteasome is able to cleave oligopeptides after Phe, Tyr and Trp, poorly after Glu but not after Arg. Thus, displays chymotrypsin-like activity, low caspase-like activity but no trypsin-like activity. This is Proteasome subunit beta from Haloferax volcanii (strain ATCC 29605 / DSM 3757 / JCM 8879 / NBRC 14742 / NCIMB 2012 / VKM B-1768 / DS2) (Halobacterium volcanii).